The sequence spans 178 residues: MKDKRRVKRDLPKINERIRFPNIRVISGDGEQLGIMTPAEALAIAEEEDLDLVLVSETAKPPVCRIMDYGKYKFEQEKRAREAKKKQHNADLKEVKMRYKIEEHDYQVRVNSAQRFLKSGDKVKATITFRGREIQHSNLAQKLLDRMAKDLEEVGEIQQRPKREGRNMMMILAPKKST.

Belongs to the IF-3 family. Monomer.

It is found in the cytoplasm. IF-3 binds to the 30S ribosomal subunit and shifts the equilibrium between 70S ribosomes and their 50S and 30S subunits in favor of the free subunits, thus enhancing the availability of 30S subunits on which protein synthesis initiation begins. This Picosynechococcus sp. (strain ATCC 27264 / PCC 7002 / PR-6) (Agmenellum quadruplicatum) protein is Translation initiation factor IF-3.